The primary structure comprises 157 residues: ATP synthase subunit b (157 aa).

The chain crosses the membrane as a helical span at residues 7 to 29 (LVSQAIAFSIFIWFTTKFVWPYL).

The protein belongs to the ATPase B chain family. F-type ATPases have 2 components, F(1) - the catalytic core - and F(0) - the membrane proton channel. F(1) has five subunits: alpha(3), beta(3), gamma(1), delta(1), epsilon(1). F(0) has three main subunits: a(1), b(2) and c(10-14). The alpha and beta chains form an alternating ring which encloses part of the gamma chain. F(1) is attached to F(0) by a central stalk formed by the gamma and epsilon chains, while a peripheral stalk is formed by the delta and b chains.

The protein localises to the cell inner membrane. F(1)F(0) ATP synthase produces ATP from ADP in the presence of a proton or sodium gradient. F-type ATPases consist of two structural domains, F(1) containing the extramembraneous catalytic core and F(0) containing the membrane proton channel, linked together by a central stalk and a peripheral stalk. During catalysis, ATP synthesis in the catalytic domain of F(1) is coupled via a rotary mechanism of the central stalk subunits to proton translocation. Its function is as follows. Component of the F(0) channel, it forms part of the peripheral stalk, linking F(1) to F(0). The protein is ATP synthase subunit b of Nitrosomonas eutropha (strain DSM 101675 / C91 / Nm57).